The chain runs to 354 residues: Fructose-bisphosphate aldolase 2 (354 aa).

Serine 50 is a D-glyceraldehyde 3-phosphate binding site. Aspartate 83 functions as the Proton donor in the catalytic mechanism. Residues histidine 84, aspartate 105, glutamate 142, and histidine 198 each coordinate Zn(2+). Glycine 199 contacts dihydroxyacetone phosphate. Histidine 232 lines the Zn(2+) pocket. Dihydroxyacetone phosphate contacts are provided by residues 233–235 and 275–278; these read GSS and NIDT.

The protein belongs to the class II fructose-bisphosphate aldolase family. In terms of assembly, homodimer. The cofactor is Zn(2+).

It carries out the reaction beta-D-fructose 1,6-bisphosphate = D-glyceraldehyde 3-phosphate + dihydroxyacetone phosphate. It participates in carbohydrate biosynthesis; Calvin cycle. Its pathway is carbohydrate degradation; glycolysis; D-glyceraldehyde 3-phosphate and glycerone phosphate from D-glucose: step 4/4. Catalyzes the aldol condensation of dihydroxyacetone phosphate (DHAP or glycerone-phosphate) with glyceraldehyde 3-phosphate (G3P) to form fructose 1,6-bisphosphate (FBP) in gluconeogenesis and the reverse reaction in glycolysis. This chain is Fructose-bisphosphate aldolase 2 (cfxB), found in Cereibacter sphaeroides (Rhodobacter sphaeroides).